Here is a 398-residue protein sequence, read N- to C-terminus: GTP cyclohydrolase-2 (398 aa).

A unknown region spans residues 1–172; that stretch reads MNTPTHTHPH…TAAAGASTTE (172 aa). The tract at residues 173–398 is GTP cyclohydrolase II; it reads YELVTRTPVP…VKSIPKTGHA (226 aa). GTP is bound at residue 220-224; it reads RVHSS. Zn(2+) is bound by residues C225, C236, and C238. Residues Q241, 263–265, and T285 each bind GTP; that span reads EGR. The active-site Proton acceptor is D297. The active-site Nucleophile is R299. S320 and K325 together coordinate GTP. Positions 375–398 are disordered; the sequence is QRPQDPSETVDGETVKSIPKTGHA.

It in the C-terminal section; belongs to the GTP cyclohydrolase II family. It depends on Zn(2+) as a cofactor.

It carries out the reaction GTP + 4 H2O = 2,5-diamino-6-hydroxy-4-(5-phosphoribosylamino)-pyrimidine + formate + 2 phosphate + 3 H(+). It functions in the pathway cofactor biosynthesis; riboflavin biosynthesis; 5-amino-6-(D-ribitylamino)uracil from GTP: step 1/4. Functionally, catalyzes the conversion of GTP to 2,5-diamino-6-ribosylamino-4(3H)-pyrimidinone 5'-phosphate (DARP), formate and pyrophosphate. This Xylella fastidiosa (strain 9a5c) protein is GTP cyclohydrolase-2 (ribA).